A 2566-amino-acid polypeptide reads, in one-letter code: Zinc finger protein GLI1 (2566 aa).

3 disordered regions span residues 349–375, 430–508, and 985–1046; these read HHSS…SQSS, DIRR…RSTG, and KSIE…GDPD. Composition is skewed to polar residues over residues 434–444 and 457–492; these read TLSSNGNSSHT and WSPN…YQQH. A compositionally biased stretch (low complexity) spans 493–508; sequence SGYTSTSGSSGNRSTG. The segment covering 993–1016 has biased composition (polar residues); that stretch reads WQNQNVFSSRRNSTRDPSNNNNSG. Residues 1023–1035 are compositionally biased toward acidic residues; the sequence is DEPDVDDDEELDD. The C2H2-type 1; degenerate zinc-finger motif lies at 1088-1110; it reads RECVRGTRPFKAQYMLVVHMRRH. C2H2-type zinc fingers lie at residues 1116-1140, 1146-1171, and 1177-1202; these read HKCI…LRSH, YQCE…NRTH, and YTCK…KTVH. 5 disordered regions span residues 1254–1313, 1465–1491, 1650–1677, 1727–1791, and 2067–2091; these read GNSN…PRDS, LSTT…TKQK, SKNM…NQNE, AAAS…MDND, and MHFS…NRPH. Low complexity-rich tracts occupy residues 1661–1677 and 1727–1743; these read NNNE…NQNE and AAAS…TTAS. Positions 1752 to 1769 are enriched in basic residues; sequence NHHHQKQQPKHSHQHQNR. The span at 1770–1791 shows a compositional bias: polar residues; that stretch reads TKSINSDNNYSNQDNVSTMDND. The segment covering 2070–2090 has biased composition (low complexity); the sequence is SPHSYVHSSSSNSSPFNSNRP.

Belongs to the GLI C2H2-type zinc-finger protein family. In terms of tissue distribution, expressed in female-paired or unpaired males along the ventral surface in neurons and skin tegument cells. In virgin and mature females, expressed bilaterally along the edges of the body in neurons. In mature females, also expressed in skin tegument cells.

The protein localises to the nucleus. Probable transcription factor which plays an essential role in males to trigger female sexual development by inducing NRPS expression in male. NRPS produces the pheromone beta-alanyl-tryptamine (BATT), which stimulates female sexual development. This Schistosoma mansoni (Blood fluke) protein is Zinc finger protein GLI1.